A 231-amino-acid chain; its full sequence is MLKLQKKLKNDYGLVFNDEDLLKTAFTHSSFTNEERLPKIANNERLEFLGDVALSLVISDYLYRTYPEKLEGELSKMRSSIVRTESLANFSRSCGFGEFLRLGHGEEKMGGRDRETTLENLFEAFLGALFIDQGMDEVRKFIQHVVIPHVKNDDYVKVIDYKTELQEVLQIGGETTISYKILKEEGPAHDRSFVAAVFNNGKELGRGLGKSKKVAEQKAAENAIKGQNHVS.

The RNase III domain occupies 5–134 (QKKLKNDYGL…FLGALFIDQG (130 aa)). Glu47 provides a ligand contact to Mg(2+). Asp51 is a catalytic residue. Mg(2+)-binding residues include Asn120 and Glu123. Glu123 is a catalytic residue. The region spanning 160 to 229 (DYKTELQEVL…AENAIKGQNH (70 aa)) is the DRBM domain.

It belongs to the ribonuclease III family. In terms of assembly, homodimer. Mg(2+) is required as a cofactor.

Its subcellular location is the cytoplasm. The catalysed reaction is Endonucleolytic cleavage to 5'-phosphomonoester.. Its function is as follows. Digests double-stranded RNA. Involved in the processing of primary rRNA transcript to yield the immediate precursors to the large and small rRNAs (23S and 16S). Processes some mRNAs, and tRNAs when they are encoded in the rRNA operon. Processes pre-crRNA and tracrRNA of type II CRISPR loci if present in the organism. The sequence is that of Ribonuclease 3 from Lactococcus lactis subsp. lactis (strain IL1403) (Streptococcus lactis).